We begin with the raw amino-acid sequence, 926 residues long: Eukaryotic translation initiation factor 3 subunit C (926 aa).

Disordered stretches follow at residues 1-27, 157-251, and 266-300; these read MSRF…PKAA, ASYK…NDGT, and EKAS…EEGG. Positions 200–210 are enriched in basic and acidic residues; it reads KPQEEEKKAPE. Acidic residues predominate over residues 220-235; it reads DEESESDDDEDSEDWA. The segment covering 274 to 283 has biased composition (basic residues); that stretch reads DDRRRRHKKK. A compositionally biased stretch (acidic residues) spans 287–299; sequence EEEAEEEGEAEEG. The region spanning 672–848 is the PCI domain; that stretch reads FHMHINLELL…QTVVMHRTEP (177 aa). A compositionally biased stretch (low complexity) spans 890-919; that stretch reads GGYQQKQGYQRGDQKGGYQQKQNYQRGGYR. Positions 890–926 are disordered; the sequence is GGYQQKQGYQRGDQKGGYQQKQNYQRGGYRNQNQSSY.

This sequence belongs to the eIF-3 subunit C family. Component of the eukaryotic translation initiation factor 3 (eIF-3) complex, which is composed of 13 subunits: eif3a, eif3b, eif3c, eif3d, eif3e, eif3f, eif3g, eif3h, eif3i, eif3j, eif3k, eif3l and eif3m.

Its subcellular location is the cytoplasm. In terms of biological role, component of the eukaryotic translation initiation factor 3 (eIF-3) complex, which is involved in protein synthesis of a specialized repertoire of mRNAs and, together with other initiation factors, stimulates binding of mRNA and methionyl-tRNAi to the 40S ribosome. The eIF-3 complex specifically targets and initiates translation of a subset of mRNAs involved in cell proliferation. The protein is Eukaryotic translation initiation factor 3 subunit C (eif3c) of Danio rerio (Zebrafish).